Consider the following 140-residue polypeptide: Nucleoside diphosphate kinase (140 aa).

Residues Lys11, Phe59, Arg87, Thr93, Arg104, and Asn114 each coordinate ATP. His117 functions as the Pros-phosphohistidine intermediate in the catalytic mechanism.

This sequence belongs to the NDK family. In terms of assembly, homotetramer. Mg(2+) serves as cofactor.

It localises to the cytoplasm. The enzyme catalyses a 2'-deoxyribonucleoside 5'-diphosphate + ATP = a 2'-deoxyribonucleoside 5'-triphosphate + ADP. It carries out the reaction a ribonucleoside 5'-diphosphate + ATP = a ribonucleoside 5'-triphosphate + ADP. Major role in the synthesis of nucleoside triphosphates other than ATP. The ATP gamma phosphate is transferred to the NDP beta phosphate via a ping-pong mechanism, using a phosphorylated active-site intermediate. The polypeptide is Nucleoside diphosphate kinase (Bartonella tribocorum (strain CIP 105476 / IBS 506)).